The sequence spans 1031 residues: Protein translocase subunit SecA (1031 aa).

ATP is bound by residues Gln143, 161–165 (GEGKT), and Asp662. Positions 1015, 1017, 1026, and 1027 each coordinate Zn(2+).

This sequence belongs to the SecA family. In terms of assembly, monomer and homodimer. Part of the essential Sec protein translocation apparatus which comprises SecA, SecYEG and auxiliary proteins SecDF. Other proteins may also be involved. The cofactor is Zn(2+).

The protein localises to the cell inner membrane. It is found in the cytoplasm. It carries out the reaction ATP + H2O + cellular proteinSide 1 = ADP + phosphate + cellular proteinSide 2.. Part of the Sec protein translocase complex. Interacts with the SecYEG preprotein conducting channel. Has a central role in coupling the hydrolysis of ATP to the transfer of proteins into and across the cell membrane, serving as an ATP-driven molecular motor driving the stepwise translocation of polypeptide chains across the membrane. This Chlorobaculum tepidum (strain ATCC 49652 / DSM 12025 / NBRC 103806 / TLS) (Chlorobium tepidum) protein is Protein translocase subunit SecA.